The primary structure comprises 1621 residues: ALK tyrosine kinase receptor (1621 aa).

The signal sequence occupies residues 1-18; the sequence is MGAAGFLWLLPPLLLAAA. Residues 19–1042 are Extracellular-facing; it reads SYSGAATDQR…PHLPLSLILS (1024 aa). The interval 48 to 70 is heparin-binding region; that stretch reads RLQRKSLAVDFVVPSLFRVYARD. Asparagine 174, asparagine 248, asparagine 289, asparagine 328, asparagine 415, asparagine 428, asparagine 449, asparagine 567, asparagine 575, asparagine 631, and asparagine 673 each carry an N-linked (GlcNAc...) asparagine glycan. In terms of domain architecture, MAM 1 spans 268–431; sequence LECSFDFPCE…DFFALKNCSE (164 aa). One can recognise an LDL-receptor class A domain in the interval 441 to 477; it reads LQSSFTCWNGTVLQLGQACDFHQDCAQGEDEGQLCSK. One can recognise an MAM 2 domain in the interval 482-640; sequence FYCNFENGFC…NISISLDCYL (159 aa). Cysteine 692 and cysteine 705 are oxidised to a cystine. Residue asparagine 713 is glycosylated (N-linked (GlcNAc...) asparagine). Cysteine 787 and cysteine 798 are disulfide-bonded. Residues asparagine 812, asparagine 868, and asparagine 890 are each glycosylated (N-linked (GlcNAc...) asparagine). Cysteine 910 and cysteine 932 form a disulfide bridge. Asparagine 990 is a glycosylation site (N-linked (GlcNAc...) asparagine). 3 disulfides stabilise this stretch: cysteine 991/cysteine 999, cysteine 994/cysteine 1010, and cysteine 1012/cysteine 1025. Residues 991–1029 form an EGF-like region; it reads CSHCEVDECHMDPESHKVICFCDHGTVLADDGVSCIVSP. The chain crosses the membrane as a helical span at residues 1043–1063; the sequence is VVTSALVAALVLAFSGIMIVY. The Cytoplasmic portion of the chain corresponds to 1064 to 1621; sequence RRKHQELQAM…SKNKVTQPGP (558 aa). Phosphotyrosine occurs at positions 1082, 1096, and 1100. Residues 1120-1396 enclose the Protein kinase domain; the sequence is ITLIRGLGHG…IEYCTQDPDV (277 aa). ATP is bound by residues 1126-1134 and histidine 1128; that span reads LGHGAFGEV. Tyrosine 1135 carries the phosphotyrosine modification. Residues lysine 1154 and 1201-1203 contribute to the ATP site; that span reads ELM. Aspartate 1253 (proton acceptor) is an active-site residue. Aspartate 1274 contributes to the ATP binding site. Tyrosine 1282 bears the Phosphotyrosine mark. The segment at 1412–1556 is disordered; that stretch reads EEKVPMRPKD…WTGPGAGPRR (145 aa). Residues 1414–1423 are compositionally biased toward basic and acidic residues; the sequence is KVPMRPKDPE. Residues 1441–1461 show a composition bias toward low complexity; that stretch reads SAAPQPAALTAPGPSVKKPPG. Gly residues predominate over residues 1462–1472; sequence AGAGAGAGAGA. Residues 1506 to 1518 are compositionally biased toward polar residues; the sequence is NKPTSLWNPTYGS. At tyrosine 1516 the chain carries Phosphotyrosine. Residues 1543 to 1552 are compositionally biased toward gly residues; that stretch reads AEGGWTGPGA.

Belongs to the protein kinase superfamily. Tyr protein kinase family. Insulin receptor subfamily. Homodimer; homodimerizes following heparin- and ligand-binding. Interacts with CBL, IRS1, PIK3R1 and PLCG1. Interacts with FRS2 and SHC1. Interacts with PTN and MDK. Post-translationally, phosphorylated at tyrosine residues by autocatalysis, which activates kinase activity. In cells not stimulated by a ligand, receptor protein tyrosine phosphatase beta and zeta complex (PTPRB/PTPRZ1) dephosphorylates ALK at the sites in ALK that are undergoing autophosphorylation through autoactivation. In terms of tissue distribution, mainly expressed in central nervous system (CNS) and other parts of the brain such as the paraventricular nucleus (PVN) of the hypothalamus. Expression is also found in peripheral nervous systems, eye, nasal epithelium, olfactory nerve, tongue, skin, tissue surrounding the esophagus, stomach, midgut, as well as testis and ovary.

It localises to the cell membrane. The catalysed reaction is L-tyrosyl-[protein] + ATP = O-phospho-L-tyrosyl-[protein] + ADP + H(+). Activated upon ALKAL2 ligand-binding. ALKAL2-driven activation is coupled with heparin-binding. Following ligand-binding, homodimerizes and autophosphorylates, activating its kinase activity. Inactivated through dephosphorylation by receptor protein tyrosine phosphatase beta and zeta complex (PTPRB/PTPRZ1) when there is no stimulation by a ligand. Functionally, neuronal receptor tyrosine kinase that is essentially and transiently expressed in specific regions of the central and peripheral nervous systems and plays an important role in the genesis and differentiation of the nervous system. Also acts as a key thinness protein involved in the resistance to weight gain: in hypothalamic neurons, controls energy expenditure acting as a negative regulator of white adipose tissue lipolysis and sympathetic tone to fine-tune energy homeostasis. Following activation by ALKAL2 ligand at the cell surface, transduces an extracellular signal into an intracellular response. In contrast, ALKAL1 is not a potent physiological ligand for ALK. Ligand-binding to the extracellular domain induces tyrosine kinase activation, leading to activation of the mitogen-activated protein kinase (MAPK) pathway. Phosphorylates almost exclusively at the first tyrosine of the Y-x-x-x-Y-Y motif. Induces tyrosine phosphorylation of CBL, FRS2, IRS1 and SHC1, as well as of the MAP kinases MAPK1/ERK2 and MAPK3/ERK1. ALK activation may also be regulated by pleiotrophin (PTN) and midkine (MDK). PTN-binding induces MAPK pathway activation, which is important for the anti-apoptotic signaling of PTN and regulation of cell proliferation. MDK-binding induces phosphorylation of the ALK target insulin receptor substrate (IRS1), activates mitogen-activated protein kinases (MAPKs) and PI3-kinase, resulting also in cell proliferation induction. Drives NF-kappa-B activation, probably through IRS1 and the activation of the AKT serine/threonine kinase. Recruitment of IRS1 to activated ALK and the activation of NF-kappa-B are essential for the autocrine growth and survival signaling of MDK. The polypeptide is ALK tyrosine kinase receptor (Mus musculus (Mouse)).